A 306-amino-acid chain; its full sequence is Mitochondrial basic amino acids transporter (306 aa).

6 helical membrane passes run 2-22 (ALDFLAGCAGGVAGVIVGHPF), 61-81 (GLGSPLMGLTFINALVFGVQG), 96-116 (FLAGAAAGAIQCVICCPMELA), 153-172 (GMVSTLLRETPSFGVYFLTY), 187-207 (LLVPKLLLAGGTSGITSWLST), and 255-275 (LLRAFPVNAATFATVTVVLTY). Solcar repeat units lie at residues 2-86 (ALDF…TLRA), 90-178 (DSPL…LTRA), and 190-275 (PKLL…VLTY). Positions 283–306 (VDSEAAPGASTTPAGPALAQPSSL) are disordered. Residues 287 to 306 (AAPGASTTPAGPALAQPSSL) show a composition bias toward low complexity.

The protein belongs to the mitochondrial carrier (TC 2.A.29) family.

Its subcellular location is the mitochondrion inner membrane. It catalyses the reaction L-lysine(out) + L-arginine(in) = L-lysine(in) + L-arginine(out). It carries out the reaction L-histidine(out) + L-arginine(in) = L-histidine(in) + L-arginine(out). The enzyme catalyses L-ornithine(in) + L-arginine(out) = L-ornithine(out) + L-arginine(in). The catalysed reaction is L-homoarginine(in) + L-arginine(out) = L-homoarginine(out) + L-arginine(in). It catalyses the reaction N(omega)-methyl-L-arginine(in) + L-arginine(out) = N(omega)-methyl-L-arginine(out) + L-arginine(in). It carries out the reaction L-arginine(in) = L-arginine(out). The enzyme catalyses L-lysine(in) = L-lysine(out). The catalysed reaction is L-ornithine(in) = L-ornithine(out). It catalyses the reaction L-histidine(out) = L-histidine(in). Mitochondrial transporter of arginine, lysine, homoarginine, methylarginine and, to a much lesser extent, ornithine and histidine. Does not transport carnitine nor acylcarnitines. Functions by both counter-exchange and uniport mechanisms. Plays a physiological role in the import of basic amino acids into mitochondria for mitochondrial protein synthesis and amino acid degradation. The protein is Mitochondrial basic amino acids transporter (Slc25a29) of Rattus norvegicus (Rat).